The chain runs to 614 residues: Probable indole-3-acetic acid-amido synthetase GH3.2 (614 aa).

It belongs to the IAA-amido conjugating enzyme family. In terms of tissue distribution, expressed in roots, flowers and callus.

In terms of biological role, may catalyze the synthesis of indole-3-acetic acid (IAA)-amino acid conjugates, providing a mechanism for the plant to cope with the presence of excess auxin. This chain is Probable indole-3-acetic acid-amido synthetase GH3.2 (GH3.2), found in Oryza sativa subsp. japonica (Rice).